Reading from the N-terminus, the 161-residue chain is PTS system glucose-specific EIIA component (161 aa).

The PTS EIIA type-1 domain occupies 31–135 (DPVFSKKIVG…SILTPVVISN (105 aa)). Zn(2+)-binding residues include His68 and His83. The active-site Tele-phosphohistidine intermediate; for EIIA activity is His83. A Phosphohistidine; by HPr modification is found at His83.

Zn(2+) is required as a cofactor.

The protein resides in the cytoplasm. Its function is as follows. The phosphoenolpyruvate-dependent sugar phosphotransferase system (sugar PTS), a major carbohydrate active transport system, catalyzes the phosphorylation of incoming sugar substrates concomitantly with their translocation across the cell membrane. The enzyme II complex composed of PtsG and Crr is involved in glucose transport. In Buchnera aphidicola subsp. Acyrthosiphon pisum (strain APS) (Acyrthosiphon pisum symbiotic bacterium), this protein is PTS system glucose-specific EIIA component (crr).